A 550-amino-acid chain; its full sequence is Glycosyltransferase-like protein gnt12 (550 aa).

Residues M1–E29 are disordered. The Cytoplasmic portion of the chain corresponds to M1–P36. Over residues N8–N25 the composition is skewed to low complexity. The chain crosses the membrane as a helical; Signal-anchor for type II membrane protein span at residues F37 to M57. At E58–C550 the chain is on the extracellular side. The segment covering L81–P97 has biased composition (low complexity). A disordered region spans residues L81–H100. Residues N233, N322, and N426 are each glycosylated (N-linked (GlcNAc...) asparagine).

This sequence belongs to the glycosyltransferase 8 family. Highly divergent.

The protein resides in the membrane. In Dictyostelium discoideum (Social amoeba), this protein is Glycosyltransferase-like protein gnt12 (gnt12).